Here is a 301-residue protein sequence, read N- to C-terminus: GTPase Era (301 aa).

Residues 6 to 173 (KSGFVAIVGR…LEQTNANLEI (168 aa)) enclose the Era-type G domain. The segment at 14 to 21 (GRPNVGKS) is G1. 14–21 (GRPNVGKS) provides a ligand contact to GTP. The interval 40 to 44 (QTTRN) is G2. Residues 61 to 64 (DTPG) are G3. Residues 61–65 (DTPGI) and 123–126 (NKID) each bind GTP. Positions 123 to 126 (NKID) are G4. The segment at 152-154 (ISA) is G5. Residues 204-282 (TREEVPHSVA…FLEVWVKVQK (79 aa)) enclose the KH type-2 domain.

Belongs to the TRAFAC class TrmE-Era-EngA-EngB-Septin-like GTPase superfamily. Era GTPase family. Monomer.

It is found in the cytoplasm. It localises to the cell membrane. Its function is as follows. An essential GTPase that binds both GDP and GTP, with rapid nucleotide exchange. Plays a role in 16S rRNA processing and 30S ribosomal subunit biogenesis and possibly also in cell cycle regulation and energy metabolism. In Listeria monocytogenes serotype 4a (strain HCC23), this protein is GTPase Era.